Here is a 281-residue protein sequence, read N- to C-terminus: uncharacterized protein (281 aa).

Disordered regions lie at residues 192 to 212 (SNSS…IQET) and 227 to 281 (EDYV…SEEY). Over residues 200 to 211 (MDKKSDDSKIQE) the composition is skewed to basic and acidic residues. 2 stretches are compositionally biased toward acidic residues: residues 227–240 (EDYV…ISDN) and 249–260 (DTDSDLGDLEDP).

Belongs to the cullin family.

This is an uncharacterized protein from Acanthamoeba polyphaga (Amoeba).